A 154-amino-acid polypeptide reads, in one-letter code: D-aminoacyl-tRNA deacylase (154 aa).

Positions 142 to 143 (GP) match the Gly-cisPro motif, important for rejection of L-amino acids motif.

The protein belongs to the DTD family. As to quaternary structure, homodimer.

It localises to the cytoplasm. It catalyses the reaction glycyl-tRNA(Ala) + H2O = tRNA(Ala) + glycine + H(+). The enzyme catalyses a D-aminoacyl-tRNA + H2O = a tRNA + a D-alpha-amino acid + H(+). In terms of biological role, an aminoacyl-tRNA editing enzyme that deacylates mischarged D-aminoacyl-tRNAs. Also deacylates mischarged glycyl-tRNA(Ala), protecting cells against glycine mischarging by AlaRS. Acts via tRNA-based rather than protein-based catalysis; rejects L-amino acids rather than detecting D-amino acids in the active site. By recycling D-aminoacyl-tRNA to D-amino acids and free tRNA molecules, this enzyme counteracts the toxicity associated with the formation of D-aminoacyl-tRNA entities in vivo and helps enforce protein L-homochirality. This chain is D-aminoacyl-tRNA deacylase, found in Polaromonas sp. (strain JS666 / ATCC BAA-500).